Consider the following 99-residue polypeptide: Plastocyanin (99 aa).

One can recognise a Plastocyanin-like domain in the interval L1–N99. Cu cation-binding residues include H37, C84, H87, and M92.

The protein belongs to the plastocyanin family. The cofactor is Cu(2+).

The protein localises to the plastid. The protein resides in the chloroplast thylakoid membrane. Participates in electron transfer between P700 and the cytochrome b6-f complex in photosystem I. The sequence is that of Plastocyanin (PETE) from Mercurialis perennis (Dog's mercury).